The chain runs to 361 residues: Transmembrane protein 116 (361 aa).

The next 7 helical transmembrane spans lie at 29-49 (WIQMTMAVLSILGAGSIILYA), 64-84 (FLLSLTDLLLALSWLCGGLLF), 103-123 (TLYMASFFYTLHYVWVLYTGL), 147-167 (LGPVLSCLLPLLLTAPVFVAG), 210-230 (CMAIFLGTFLITIVGMSIFMG), 261-281 (MVLYPSAFFFCWGPALLLATM), and 295-315 (VALYILQAFTSASQGLLNCLV).

It is found in the membrane. This Danio rerio (Zebrafish) protein is Transmembrane protein 116 (tmem116).